The following is a 313-amino-acid chain: Ribosomal RNA small subunit methyltransferase H (313 aa).

S-adenosyl-L-methionine-binding positions include 36-38 (GGH), Asp56, Phe80, Asp102, and Gln109.

This sequence belongs to the methyltransferase superfamily. RsmH family.

It is found in the cytoplasm. The catalysed reaction is cytidine(1402) in 16S rRNA + S-adenosyl-L-methionine = N(4)-methylcytidine(1402) in 16S rRNA + S-adenosyl-L-homocysteine + H(+). Functionally, specifically methylates the N4 position of cytidine in position 1402 (C1402) of 16S rRNA. This chain is Ribosomal RNA small subunit methyltransferase H, found in Haemophilus ducreyi (strain 35000HP / ATCC 700724).